A 316-amino-acid polypeptide reads, in one-letter code: tRNA-cytidine(32) 2-sulfurtransferase (316 aa).

A PP-loop motif motif is present at residues 52–57 (SGGKDS). [4Fe-4S] cluster contacts are provided by Cys-127, Cys-130, and Cys-218.

The protein belongs to the TtcA family. In terms of assembly, homodimer. Mg(2+) is required as a cofactor. [4Fe-4S] cluster serves as cofactor.

The protein localises to the cytoplasm. It carries out the reaction cytidine(32) in tRNA + S-sulfanyl-L-cysteinyl-[cysteine desulfurase] + AH2 + ATP = 2-thiocytidine(32) in tRNA + L-cysteinyl-[cysteine desulfurase] + A + AMP + diphosphate + H(+). Its pathway is tRNA modification. Its function is as follows. Catalyzes the ATP-dependent 2-thiolation of cytidine in position 32 of tRNA, to form 2-thiocytidine (s(2)C32). The sulfur atoms are provided by the cysteine/cysteine desulfurase (IscS) system. The sequence is that of tRNA-cytidine(32) 2-sulfurtransferase from Haemophilus ducreyi (strain 35000HP / ATCC 700724).